Here is a 172-residue protein sequence, read N- to C-terminus: FMN reductase (NADH) RutF 2 (172 aa).

This sequence belongs to the non-flavoprotein flavin reductase family. RutF subfamily.

It carries out the reaction FMNH2 + NAD(+) = FMN + NADH + 2 H(+). In terms of biological role, catalyzes the reduction of FMN to FMNH2 which is used to reduce pyrimidine by RutA via the Rut pathway. This Methylorubrum extorquens (strain PA1) (Methylobacterium extorquens) protein is FMN reductase (NADH) RutF 2.